We begin with the raw amino-acid sequence, 603 residues long: Membrane protein insertase YidC (603 aa).

The helical transmembrane segment at 7–27 (FFITIALSVLILAVWQYFYVL) threads the bilayer. Positions 38 to 51 (RVEQQRVEEQKKAA) are enriched in basic and acidic residues. The tract at residues 38-76 (RVEQQRVEEQKKAAEAANPGAGTPAPAPGTIPNAPGGDT) is disordered. Low complexity predominate over residues 52-74 (EAANPGAGTPAPAPGTIPNAPGG). 5 helical membrane passes run 352 to 372 (FDLL…FWLI), 378 to 398 (FLGN…ALFF), 452 to 472 (WPVA…YITI), 497 to 517 (LFGL…WPLI), and 540 to 560 (IFTW…AGLV).

Belongs to the OXA1/ALB3/YidC family. Type 1 subfamily. In terms of assembly, interacts with the Sec translocase complex via SecD. Specifically interacts with transmembrane segments of nascent integral membrane proteins during membrane integration.

The protein localises to the cell inner membrane. Functionally, required for the insertion and/or proper folding and/or complex formation of integral membrane proteins into the membrane. Involved in integration of membrane proteins that insert both dependently and independently of the Sec translocase complex, as well as at least some lipoproteins. Aids folding of multispanning membrane proteins. The protein is Membrane protein insertase YidC of Mesorhizobium japonicum (strain LMG 29417 / CECT 9101 / MAFF 303099) (Mesorhizobium loti (strain MAFF 303099)).